A 334-amino-acid chain; its full sequence is Protein-methionine-sulfoxide reductase catalytic subunit MsrP (334 aa).

The segment at residues 1 to 44 (MKKNQFLKESDVTAESVFFMKRRQVLKALGISAAALSLPHAAHA) is a signal peptide (tat-type signal). Residues Asn88, 91–92 (YE), Cys146, Thr181, Asn233, Arg238, and 249–251 (GIK) contribute to the Mo-molybdopterin site.

It belongs to the MsrP family. Heterodimer of a catalytic subunit (MsrP) and a heme-binding subunit (MsrQ). Mo-molybdopterin serves as cofactor. In terms of processing, predicted to be exported by the Tat system. The position of the signal peptide cleavage has not been experimentally proven.

The protein localises to the periplasm. It carries out the reaction L-methionyl-[protein] + a quinone + H2O = L-methionyl-(S)-S-oxide-[protein] + a quinol. The catalysed reaction is L-methionyl-[protein] + a quinone + H2O = L-methionyl-(R)-S-oxide-[protein] + a quinol. Part of the MsrPQ system that repairs oxidized periplasmic proteins containing methionine sulfoxide residues (Met-O), using respiratory chain electrons. Thus protects these proteins from oxidative-stress damage caused by reactive species of oxygen and chlorine generated by the host defense mechanisms. MsrPQ is essential for the maintenance of envelope integrity under bleach stress, rescuing a wide series of structurally unrelated periplasmic proteins from methionine oxidation, including the primary periplasmic chaperone SurA and the lipoprotein Pal. The catalytic subunit MsrP is non-stereospecific, being able to reduce both (R-) and (S-) diastereoisomers of methionine sulfoxide. In Escherichia coli (strain UTI89 / UPEC), this protein is Protein-methionine-sulfoxide reductase catalytic subunit MsrP.